Reading from the N-terminus, the 472-residue chain is MRLLVIFLLALLLMACKEAPKPLADPRTTKEIIVVTHNGPSTYYYSGNNQYAGLEHDLVRNFVRELGPEYSVKFLVVNNISQVIPTLLKHKAHFAAADLSITRTREHLVRFTRPYQKVQQQIVFNNELTKAPKNIKELLNRQIAVPSGTSYSERLQRLKEQEPLLSWTETPHANSDELMAQVAEGELDFTVADGHLIALVQNYYPNLGATLALGKPEEIAWAFPKTGDTWLYEKANAFFTRISQDGTLNHLIDRYYGHADRLKPVDVTTFMQRSETLLPQYKRLFYEAQELTGLDWRLVAAIAYQESHWDRFNTSPTNVRGMMMLTEDTADRLGVTDRLDARQSIIAGARYVLMLKDLIPDSVHEPDRTWMALAAYNIGYAHLQDARILAKRLKLNPDRWVDVKKALPLLSKEEYFSTLKYGFARGGAPVVFVESVRTYHKILARREPRHTPIFPSFEVANLNGFGNTLSQE.

Positions 1 to 24 (MRLLVIFLLALLLMACKEAPKPLA) are cleaved as a signal peptide. Positions 25–259 (DPRTTKEIIV…HLIDRYYGHA (235 aa)) are non-LT domain. An LT domain region spans residues 260–472 (DRLKPVDVTT…NGFGNTLSQE (213 aa)). Glu-306 is a catalytic residue.

The protein in the N-terminal section; belongs to the bacterial solute-binding protein 3 family. This sequence in the C-terminal section; belongs to the transglycosylase Slt family.

The protein localises to the cell outer membrane. It catalyses the reaction Exolytic cleavage of the (1-&gt;4)-beta-glycosidic linkage between N-acetylmuramic acid (MurNAc) and N-acetylglucosamine (GlcNAc) residues in peptidoglycan, from either the reducing or the non-reducing ends of the peptidoglycan chains, with concomitant formation of a 1,6-anhydrobond in the MurNAc residue.. Functionally, murein-degrading enzyme that degrades murein glycan strands and insoluble, high-molecular weight murein sacculi, with the concomitant formation of a 1,6-anhydromuramoyl product. Lytic transglycosylases (LTs) play an integral role in the metabolism of the peptidoglycan (PG) sacculus. Their lytic action creates space within the PG sacculus to allow for its expansion as well as for the insertion of various structures such as secretion systems and flagella. The protein is Membrane-bound lytic murein transglycosylase F of Methylobacillus flagellatus (strain ATCC 51484 / DSM 6875 / VKM B-1610 / KT).